The following is a 105-amino-acid chain: Urease subunit beta (105 aa).

The protein belongs to the urease beta subunit family. In terms of assembly, heterotrimer of UreA (gamma), UreB (beta) and UreC (alpha) subunits. Three heterotrimers associate to form the active enzyme.

Its subcellular location is the cytoplasm. The enzyme catalyses urea + 2 H2O + H(+) = hydrogencarbonate + 2 NH4(+). Its pathway is nitrogen metabolism; urea degradation; CO(2) and NH(3) from urea (urease route): step 1/1. The protein is Urease subunit beta of Prochlorococcus marinus (strain MIT 9313).